We begin with the raw amino-acid sequence, 218 residues long: Octanoyltransferase (218 aa).

A BPL/LPL catalytic domain is found at Gly30 to Ala217. Residues Arg68–His75, Ala148–Gly150, and Gly161–Ala163 contribute to the substrate site. Cys179 serves as the catalytic Acyl-thioester intermediate.

The protein belongs to the LipB family.

It is found in the cytoplasm. It catalyses the reaction octanoyl-[ACP] + L-lysyl-[protein] = N(6)-octanoyl-L-lysyl-[protein] + holo-[ACP] + H(+). It functions in the pathway protein modification; protein lipoylation via endogenous pathway; protein N(6)-(lipoyl)lysine from octanoyl-[acyl-carrier-protein]: step 1/2. Its function is as follows. Catalyzes the transfer of endogenously produced octanoic acid from octanoyl-acyl-carrier-protein onto the lipoyl domains of lipoate-dependent enzymes. Lipoyl-ACP can also act as a substrate although octanoyl-ACP is likely to be the physiological substrate. The sequence is that of Octanoyltransferase from Paracoccus denitrificans (strain Pd 1222).